Reading from the N-terminus, the 453-residue chain is Transmembrane protease serine 3 (453 aa).

Residues 1–48 (MGENDPPAAEAPFSFRSLFGLDDLKISPVAPDGDAVAAQILSLLPLKF) lie on the Cytoplasmic side of the membrane. A helical; Signal-anchor for type II membrane protein transmembrane segment spans residues 49–69 (FPIIVIGIIALILALAIGLGI). Residues 70–453 (HFDCSGKYRC…HEQLERDLKT (384 aa)) lie on the Extracellular side of the membrane. Residues 72 to 108 (DCSGKYRCHSSFKCIELTARCDGVSDCKNAEDEYRCV) form the LDL-receptor class A domain. 10 disulfides stabilise this stretch: cysteine 73-cysteine 85, cysteine 79-cysteine 98, cysteine 92-cysteine 107, cysteine 129-cysteine 194, cysteine 142-cysteine 204, cysteine 207-cysteine 324, cysteine 242-cysteine 258, cysteine 338-cysteine 406, cysteine 369-cysteine 385, and cysteine 396-cysteine 424. In terms of domain architecture, SRCR spans 104-205 (EYRCVRVSGQ…SGHVVTLKCS (102 aa)). The 232-residue stretch at 217–448 (IVGGNMSSLT…FLDWIHEQLE (232 aa)) folds into the Peptidase S1 domain. The N-linked (GlcNAc...) asparagine glycan is linked to asparagine 221. Residues histidine 257 and aspartate 304 each act as charge relay system in the active site. Serine 400 functions as the Charge relay system in the catalytic mechanism.

This sequence belongs to the peptidase S1 family. In terms of processing, undergoes autoproteolytic activation. As to expression, strongly expressed in liver, cochlea, brain, cerebellum, spleen, lung, and muscle and at a lower degree in retina, kidney, and heart. Expressed in the spiral ganglion, the cells supporting the organ of Corti and the stria vascularis. Isoform 2 is strongly expressed only in the cochlea with very faint expression in the cerebellum, spleen and muscle.

The protein resides in the endoplasmic reticulum membrane. Its function is as follows. Probable serine protease that plays a role in hearing. Acts as a permissive factor for cochlear hair cell survival and activation at the onset of hearing and is required for saccular hair cell survival. Activates ENaC (in vitro). In Mus musculus (Mouse), this protein is Transmembrane protease serine 3 (Tmprss3).